Consider the following 342-residue polypeptide: Methionine import ATP-binding protein MetN 3 (342 aa).

Residues 2-241 (ISLKGISKTF…PKEQMTKEFV (240 aa)) enclose the ABC transporter domain. An ATP-binding site is contributed by 38 to 45 (GYSGAGKS).

The protein belongs to the ABC transporter superfamily. Methionine importer (TC 3.A.1.24) family. In terms of assembly, the complex is composed of two ATP-binding proteins (MetN), two transmembrane proteins (MetI) and a solute-binding protein (MetQ).

Its subcellular location is the cell membrane. The enzyme catalyses L-methionine(out) + ATP + H2O = L-methionine(in) + ADP + phosphate + H(+). It catalyses the reaction D-methionine(out) + ATP + H2O = D-methionine(in) + ADP + phosphate + H(+). Its function is as follows. Part of the ABC transporter complex MetNIQ involved in methionine import. Responsible for energy coupling to the transport system. The protein is Methionine import ATP-binding protein MetN 3 of Shouchella clausii (strain KSM-K16) (Alkalihalobacillus clausii).